A 343-amino-acid chain; its full sequence is Dihydroorotate dehydrogenase (quinone) (343 aa).

FMN-binding positions include 61-65 (AGLDK) and threonine 85. Lysine 65 is a binding site for substrate. 110-114 (NRMGF) is a binding site for substrate. FMN is bound by residues asparagine 138 and asparagine 171. Position 171 (asparagine 171) interacts with substrate. Serine 174 serves as the catalytic Nucleophile. Position 176 (asparagine 176) interacts with substrate. Residues lysine 216 and threonine 244 each coordinate FMN. Residue 245-246 (NT) participates in substrate binding. FMN-binding positions include glycine 267, glycine 296, and 317–318 (YS).

The protein belongs to the dihydroorotate dehydrogenase family. Type 2 subfamily. As to quaternary structure, monomer. FMN serves as cofactor.

It localises to the cell membrane. It catalyses the reaction (S)-dihydroorotate + a quinone = orotate + a quinol. It functions in the pathway pyrimidine metabolism; UMP biosynthesis via de novo pathway; orotate from (S)-dihydroorotate (quinone route): step 1/1. Functionally, catalyzes the conversion of dihydroorotate to orotate with quinone as electron acceptor. This is Dihydroorotate dehydrogenase (quinone) from Pseudomonas syringae pv. tomato (strain ATCC BAA-871 / DC3000).